A 536-amino-acid chain; its full sequence is 2-isopropylmalate synthase (536 aa).

One can recognise a Pyruvate carboxyltransferase domain in the interval 8–273 (VLIFDTTLRD…FFGRDPESPT (266 aa)). Residues Asp17, His208, His210, and Asn244 each coordinate Mn(2+). Residues 408–536 (QLQLVQVSCG…PQHDLIKANL (129 aa)) form a regulatory domain region.

It belongs to the alpha-IPM synthase/homocitrate synthase family. LeuA type 1 subfamily. In terms of assembly, homodimer. The cofactor is Mn(2+).

It localises to the cytoplasm. It carries out the reaction 3-methyl-2-oxobutanoate + acetyl-CoA + H2O = (2S)-2-isopropylmalate + CoA + H(+). Its pathway is amino-acid biosynthesis; L-leucine biosynthesis; L-leucine from 3-methyl-2-oxobutanoate: step 1/4. Functionally, catalyzes the condensation of the acetyl group of acetyl-CoA with 3-methyl-2-oxobutanoate (2-ketoisovalerate) to form 3-carboxy-3-hydroxy-4-methylpentanoate (2-isopropylmalate). In Prochlorococcus marinus (strain MIT 9211), this protein is 2-isopropylmalate synthase.